Reading from the N-terminus, the 460-residue chain is Mogroside I-E synthase (460 aa).

Histidine 25 serves as the catalytic Proton acceptor. Catalysis depends on aspartate 114, which acts as the Charge relay. UDP-alpha-D-glucose contacts are provided by serine 286, cysteine 339, glutamine 341, tryptophan 359, asparagine 360, serine 361, glutamate 364, aspartate 380, and glutamine 381.

Belongs to the UDP-glycosyltransferase family. In terms of tissue distribution, highly expressed in young fruits 15 days after anthesis (15-DAA).

The enzyme catalyses mogrol + UDP-alpha-D-glucose = mogroside IE + UDP + H(+). It carries out the reaction mogroside I-A1 + UDP-alpha-D-glucose = mogroside IIE + UDP + H(+). The catalysed reaction is mogroside II-A1 + UDP-alpha-D-glucose = mogroside IIIX + UDP + H(+). It catalyses the reaction mogroside II-A + UDP-alpha-D-glucose = mogroside III + UDP + H(+). The enzyme catalyses mogroside III-A1 + UDP-alpha-D-glucose = siamenoside I + UDP + H(+). It functions in the pathway secondary metabolite biosynthesis; terpenoid biosynthesis. In terms of biological role, UDP-glycosyltransferase involved in the biosynthesis of cucurbitacin and mogroside tetracyclic triterpene natural products (e.g. siamenoside I and mogrosides IV, V and VI). Cucurbitacins have cytotoxic properties and exhibit deterrent taste as a defense barrier against herbivores. Mogrosides are nonsugar highly oxygenated compounds used as high-intensity zero-calorie sweeteners; they also possess pharmacological properties such as regulating immunity, lowering blood sugar and lipid levels, protecting the liver, and acting as antioxidants and antitumor agents. Catalyzes the C3 primary glucosylation of mogrol, mogroside I-A1, mogroside II-A1, mogroside II-A and mogroside III-A1. In Siraitia grosvenorii (Monk's fruit), this protein is Mogroside I-E synthase.